The sequence spans 310 residues: Cytosolic Fe-S cluster assembly factor Nubp1 homolog (310 aa).

[4Fe-4S] cluster is bound by residues Cys-8, Cys-22, Cys-25, and Cys-31. 62–69 (GKGGVGKS) serves as a coordination point for ATP. [4Fe-4S] cluster-binding residues include Cys-239 and Cys-242.

This sequence belongs to the Mrp/NBP35 ATP-binding proteins family. NUBP1/NBP35 subfamily. Heterotetramer of 2 Nubp1 and 2 Nubp2 chains. It depends on [4Fe-4S] cluster as a cofactor.

The protein resides in the cytoplasm. Its function is as follows. Component of the cytosolic iron-sulfur (Fe/S) protein assembly (CIA) machinery. Required for maturation of extramitochondrial Fe-S proteins. The Nubp1-Nubp2 heterotetramer forms a Fe-S scaffold complex, mediating the de novo assembly of an Fe-S cluster and its transfer to target apoproteins. The sequence is that of Cytosolic Fe-S cluster assembly factor Nubp1 homolog from Drosophila willistoni (Fruit fly).